The chain runs to 81 residues: uncharacterized protein (81 aa).

This is an uncharacterized protein from Archaeoglobus fulgidus (strain ATCC 49558 / DSM 4304 / JCM 9628 / NBRC 100126 / VC-16).